The following is a 123-amino-acid chain: Large ribosomal subunit protein uL14 (123 aa).

This sequence belongs to the universal ribosomal protein uL14 family. Part of the 50S ribosomal subunit. Forms a cluster with proteins L3 and L19. In the 70S ribosome, L14 and L19 interact and together make contacts with the 16S rRNA in bridges B5 and B8.

Its function is as follows. Binds to 23S rRNA. Forms part of two intersubunit bridges in the 70S ribosome. The sequence is that of Large ribosomal subunit protein uL14 from Actinobacillus succinogenes (strain ATCC 55618 / DSM 22257 / CCUG 43843 / 130Z).